Here is a 22-residue protein sequence, read N- to C-terminus: Mu-conotoxin SxIIIA (22 aa).

Intrachain disulfides connect Cys2–Cys15, Cys3–Cys20, and Cys10–Cys21. Ala22 is modified (alanine amide).

Belongs to the conotoxin M superfamily. Expressed by the venom duct.

Its subcellular location is the secreted. In terms of biological role, mu-conotoxins block voltage-gated sodium channels (Nav). This synthetic toxin potently blocks rNav1.4/SCN4A (IC(50)= 7 nM). It also moderately blocks rNav1.1/SCN1A (IC(50)=370 nM), rNav1.2/SCN2A (IC(50)=1 uM), and mNav1.6/SCN6A (IC(50)=570 nM). It is noteworthy that coexpression of subunits beta-2 or beta-4 (but not beta-1 or beta-3) decrease by more that 10-fold the binding potency of the toxin to rNav1.6. It is also noteworthy that the toxin is 50-fold more potent on mouse Nav1.6 than on rat Nav1.6. In vivo, when injected intraperitoneally or subcutaneously in mice, causes motor impairment, paralysis and death. The chain is Mu-conotoxin SxIIIA from Conus striolatus (Cone snail).